The sequence spans 659 residues: RNA-binding E3 ubiquitin-protein ligase MEX3C (659 aa).

Low complexity predominate over residues 1-15 (MPSGSSAALALAAAP). The disordered stretch occupies residues 1–140 (MPSGSSAALA…EEAEEEDRSS (140 aa)). Residues 16–37 (APLPQPPPPPPPPPPPLPPPSG) are compositionally biased toward pro residues. The span at 64–82 (EPGAPALRAPAAAAQGQAR) shows a compositional bias: low complexity. Positions 83 to 94 (RAAELSPEERAP) are enriched in basic and acidic residues. Ser-88 carries the post-translational modification Phosphoserine. A compositionally biased stretch (acidic residues) spans 104–137 (AELELEEDEEEGEEAELDGDLLEEEELEEAEEED). KH domains are found at residues 232–293 (TTEC…KREI) and 326–387 (QTTV…REEI). Residues 513–569 (FEPVNPLSGFGSDPSGNMKTQRRGSQPSTPRLSPTFPESIEHPLARRVRSDPPSTGN) form a disordered region. A compositionally biased stretch (polar residues) spans 526–544 (PSGNMKTQRRGSQPSTPRL). Ser-537 and Ser-545 each carry phosphoserine. Over residues 551-562 (SIEHPLARRVRS) the composition is skewed to basic and acidic residues. The segment at 608-648 (CVICFENEVIAALVPCGHNLFCMECANKICEKRTPSCPVCQ) adopts an RING-type zinc-finger fold.

Interacts with USP7, which antagonizes the ability to degrade mRNA. As to expression, highest levels found in fetal brain and testis. Also expressed in thymus, salivary gland and uterus. Highly expressed in cells of the innate immune system, in particular activated NK cells. Week expression in the intestine.

The protein resides in the cytoplasm. It localises to the nucleus. The enzyme catalyses S-ubiquitinyl-[E2 ubiquitin-conjugating enzyme]-L-cysteine + [acceptor protein]-L-lysine = [E2 ubiquitin-conjugating enzyme]-L-cysteine + N(6)-ubiquitinyl-[acceptor protein]-L-lysine.. E3 ubiquitin ligase responsible for the post-transcriptional regulation of common HLA-A allotypes. Binds to the 3' UTR of HLA-A2 mRNA, and regulates its levels by promoting mRNA decay. RNA binding is sufficient to prevent translation, but ubiquitin ligase activity is required for mRNA degradation. The sequence is that of RNA-binding E3 ubiquitin-protein ligase MEX3C (MEX3C) from Homo sapiens (Human).